The sequence spans 157 residues: Crossover junction endodeoxyribonuclease RuvC (157 aa).

Residues D7, E66, and D139 contribute to the active site. Mg(2+) contacts are provided by D7, E66, and D139.

Belongs to the RuvC family. As to quaternary structure, homodimer which binds Holliday junction (HJ) DNA. The HJ becomes 2-fold symmetrical on binding to RuvC with unstacked arms; it has a different conformation from HJ DNA in complex with RuvA. In the full resolvosome a probable DNA-RuvA(4)-RuvB(12)-RuvC(2) complex forms which resolves the HJ. Mg(2+) is required as a cofactor.

It is found in the cytoplasm. It carries out the reaction Endonucleolytic cleavage at a junction such as a reciprocal single-stranded crossover between two homologous DNA duplexes (Holliday junction).. Its function is as follows. The RuvA-RuvB-RuvC complex processes Holliday junction (HJ) DNA during genetic recombination and DNA repair. Endonuclease that resolves HJ intermediates. Cleaves cruciform DNA by making single-stranded nicks across the HJ at symmetrical positions within the homologous arms, yielding a 5'-phosphate and a 3'-hydroxyl group; requires a central core of homology in the junction. The consensus cleavage sequence is 5'-(A/T)TT(C/G)-3'. Cleavage occurs on the 3'-side of the TT dinucleotide at the point of strand exchange. HJ branch migration catalyzed by RuvA-RuvB allows RuvC to scan DNA until it finds its consensus sequence, where it cleaves and resolves the cruciform DNA. The polypeptide is Crossover junction endodeoxyribonuclease RuvC (Helicobacter pylori (strain Shi470)).